The sequence spans 103 residues: Large ribosomal subunit protein bL21 (103 aa).

It belongs to the bacterial ribosomal protein bL21 family. As to quaternary structure, part of the 50S ribosomal subunit. Contacts protein L20.

This protein binds to 23S rRNA in the presence of protein L20. In Paraburkholderia phymatum (strain DSM 17167 / CIP 108236 / LMG 21445 / STM815) (Burkholderia phymatum), this protein is Large ribosomal subunit protein bL21.